We begin with the raw amino-acid sequence, 505 residues long: 2,3-bisphosphoglycerate-independent phosphoglycerate mutase (505 aa).

Aspartate 13 and serine 63 together coordinate Mn(2+). Residue serine 63 is the Phosphoserine intermediate of the active site. Substrate is bound by residues histidine 124, 153–154, arginine 183, arginine 189, 254–257, and lysine 330; these read RD and RADR. Positions 396, 400, 437, 438, and 456 each coordinate Mn(2+).

This sequence belongs to the BPG-independent phosphoglycerate mutase family. In terms of assembly, monomer. Mn(2+) serves as cofactor.

The enzyme catalyses (2R)-2-phosphoglycerate = (2R)-3-phosphoglycerate. It participates in carbohydrate degradation; glycolysis; pyruvate from D-glyceraldehyde 3-phosphate: step 3/5. In terms of biological role, catalyzes the interconversion of 2-phosphoglycerate and 3-phosphoglycerate. The chain is 2,3-bisphosphoglycerate-independent phosphoglycerate mutase from Roseobacter denitrificans (strain ATCC 33942 / OCh 114) (Erythrobacter sp. (strain OCh 114)).